Consider the following 258-residue polypeptide: Type III pantothenate kinase (258 aa).

6–13 (DIGNTNTV) serves as a coordination point for ATP. Residues Y100 and 107–110 (GADR) contribute to the substrate site. D109 acts as the Proton acceptor in catalysis. D129 lines the K(+) pocket. Residue T132 participates in ATP binding. Residue T185 coordinates substrate.

This sequence belongs to the type III pantothenate kinase family. In terms of assembly, homodimer. Requires NH4(+) as cofactor. The cofactor is K(+).

It is found in the cytoplasm. The catalysed reaction is (R)-pantothenate + ATP = (R)-4'-phosphopantothenate + ADP + H(+). The protein operates within cofactor biosynthesis; coenzyme A biosynthesis; CoA from (R)-pantothenate: step 1/5. Catalyzes the phosphorylation of pantothenate (Pan), the first step in CoA biosynthesis. This Syntrophobacter fumaroxidans (strain DSM 10017 / MPOB) protein is Type III pantothenate kinase.